We begin with the raw amino-acid sequence, 367 residues long: Auxin efflux carrier component 8 (367 aa).

The Extracellular portion of the chain corresponds to 1–6 (MISWLD). A helical transmembrane segment spans residues 7–27 (IYHVVSATVPLYVSMTLGFLS). The Cytoplasmic segment spans residues 28–38 (ARHLKLFSPEQ). Residues 39-59 (CAGINKFVAKFSIPLLSFQII) traverse the membrane as a helical segment. I51 contributes to the (indol-3-yl)acetate binding site. Residues 60–69 (SENNPFKMSP) are Extracellular-facing. Residues 70-90 (KLILSDILQKFLVVVVLAMVL) form a helical membrane-spanning segment. The Cytoplasmic segment spans residues 91–105 (RFWHPTGGRGGKLGW). Residues 106–126 (VITGLSISVLPNTLILGMPIL) traverse the membrane as a helical segment. N117 and L119 together coordinate (indol-3-yl)acetate. Topologically, residues 127–136 (SAIYGDEAAS) are extracellular. The helical transmembrane segment at 137 to 157 (ILEQIVVLQSLIWYTILLFLF) threads the bilayer. (indol-3-yl)acetate is bound at residue Y150. Residues 158–227 (ELNAARALPS…LIINPNTYAT (70 aa)) lie on the Cytoplasmic side of the membrane. Residues 168–194 (SGASLEHTGNDQEEANIEDEPKEEEDE) form a disordered region. Over residues 178–194 (DQEEANIEDEPKEEEDE) the composition is skewed to acidic residues. A helical membrane pass occupies residues 228–248 (LIGIIWATLHFRLGWNLPEMI). Residues 249 to 251 (DKS) are Extracellular-facing. The helical transmembrane segment at 252–272 (IHLLSDGGLGMAMFSLGLFMA) threads the bilayer. Residues 273–288 (SQSSIIACGTKMAIIT) lie on the Cytoplasmic side of the membrane. A helical transmembrane segment spans residues 289–309 (MLLKFVLGPALMIASAYCIRL). Topologically, residues 310–312 (KST) are extracellular. A helical transmembrane segment spans residues 313–333 (LFKVAILQAALPQGVVPFVFA). V327 and V328 together coordinate (indol-3-yl)acetate. The Cytoplasmic segment spans residues 334-344 (KEYNLHPEIIS). The helical transmembrane segment at 345 to 365 (TGVIFGMLIALPTTLAYYFLL) threads the bilayer. Residues 366–367 (DL) lie on the Extracellular side of the membrane.

This sequence belongs to the auxin efflux carrier (TC 2.A.69.1) family. In terms of assembly, homodimer. In terms of tissue distribution, expressed in veins of mature leaves. Strongly expressed in pollen.

It localises to the endoplasmic reticulum membrane. It is found in the cell membrane. With respect to regulation, auxin efflux carrier activity is competitively inhibited by naptalamate (N-1-naphthylphthalamic acid, NPA). Functionally, acts as a component of the auxin efflux carrier. Component of the intracellular auxin-transport pathway in the male gametophyte. Involved in the regulation of auxin homeostasis in pollen. Involved in the efflux of auxin from the endoplasmic reticulum into the cytoplasm. Binds auxins including indole-3-acetic acid (IAA), naphthaleneacetic acid (NAA) and the herbicide 2,4-dichlorophenoxyacetic acid (2,4-D), but barely indole-3-butyric acid (IBA) and 2-phenylacetic acid (PAA). PIN5 and PIN8 may have an antagonistic/compensatory activity. Involved in the control of vein patterning. Redundantly with PIN6, inhibits the vein-formation-promoting functions of PIN5. PIN5, PIN6, and PIN8 control vein network geometry, but they are expressed in mutually exclusive domains of leaf vascular cells. This is Auxin efflux carrier component 8 from Arabidopsis thaliana (Mouse-ear cress).